Consider the following 100-residue polypeptide: DNA-binding protein HU (100 aa).

This sequence belongs to the bacterial histone-like protein family.

Functionally, histone-like DNA-binding protein which is capable of wrapping DNA to stabilize it, and thus to prevent its denaturation under extreme environmental conditions. This chain is DNA-binding protein HU (hup), found in Synechocystis sp. (strain ATCC 27184 / PCC 6803 / Kazusa).